Reading from the N-terminus, the 232-residue chain is Phosphatidylserine decarboxylase proenzyme (232 aa).

Ser-190 serves as the catalytic Schiff-base intermediate with substrate; via pyruvic acid. Ser-190 carries the post-translational modification Pyruvic acid (Ser); by autocatalysis.

It belongs to the phosphatidylserine decarboxylase family. PSD-A subfamily. Heterodimer of a large membrane-associated beta subunit and a small pyruvoyl-containing alpha subunit. The cofactor is pyruvate. In terms of processing, is synthesized initially as an inactive proenzyme. Formation of the active enzyme involves a self-maturation process in which the active site pyruvoyl group is generated from an internal serine residue via an autocatalytic post-translational modification. Two non-identical subunits are generated from the proenzyme in this reaction, and the pyruvate is formed at the N-terminus of the alpha chain, which is derived from the carboxyl end of the proenzyme. The post-translation cleavage follows an unusual pathway, termed non-hydrolytic serinolysis, in which the side chain hydroxyl group of the serine supplies its oxygen atom to form the C-terminus of the beta chain, while the remainder of the serine residue undergoes an oxidative deamination to produce ammonia and the pyruvoyl prosthetic group on the alpha chain.

Its subcellular location is the cell membrane. The enzyme catalyses a 1,2-diacyl-sn-glycero-3-phospho-L-serine + H(+) = a 1,2-diacyl-sn-glycero-3-phosphoethanolamine + CO2. The protein operates within phospholipid metabolism; phosphatidylethanolamine biosynthesis; phosphatidylethanolamine from CDP-diacylglycerol: step 2/2. Catalyzes the formation of phosphatidylethanolamine (PtdEtn) from phosphatidylserine (PtdSer). The protein is Phosphatidylserine decarboxylase proenzyme of Bradyrhizobium sp. (strain ORS 278).